A 353-amino-acid polypeptide reads, in one-letter code: JmjC domain-containing protein E (353 aa).

Residues 138–348 form the JmjC domain; sequence YYIQYQNNSL…ETTKYQKQIK (211 aa).

In Dictyostelium discoideum (Social amoeba), this protein is JmjC domain-containing protein E (jcdE).